The primary structure comprises 304 residues: Ribonuclease Z (304 aa).

Residues histidine 63, histidine 65, aspartate 67, histidine 68, histidine 143, aspartate 213, and histidine 271 each coordinate Zn(2+). Residue aspartate 67 is the Proton acceptor of the active site.

It belongs to the RNase Z family. In terms of assembly, homodimer. Zn(2+) is required as a cofactor.

It carries out the reaction Endonucleolytic cleavage of RNA, removing extra 3' nucleotides from tRNA precursor, generating 3' termini of tRNAs. A 3'-hydroxy group is left at the tRNA terminus and a 5'-phosphoryl group is left at the trailer molecule.. Its function is as follows. Zinc phosphodiesterase, which displays some tRNA 3'-processing endonuclease activity. Probably involved in tRNA maturation, by removing a 3'-trailer from precursor tRNA. The protein is Ribonuclease Z of Bacteroides fragilis (strain YCH46).